The primary structure comprises 388 residues: Na(+)/H(+) antiporter NhaA (388 aa).

Helical transmembrane passes span 13–33 (AAGG…ANTP), 36–56 (GIYH…LEIA), 59–79 (LLLW…GLEV), 95–115 (VFPA…YLMF), 125–145 (GWAI…ALLG), 154–174 (VFLL…IALF), 179–199 (VSMA…FMNW), 213–233 (LVLW…GVII), 259–279 (VAFL…LQGV), 287–307 (LLPV…IFTF), 328–348 (VFAV…IASL), and 363–383 (LGIL…LRMS).

It belongs to the NhaA Na(+)/H(+) (TC 2.A.33) antiporter family.

It localises to the cell inner membrane. The enzyme catalyses Na(+)(in) + 2 H(+)(out) = Na(+)(out) + 2 H(+)(in). Its function is as follows. Na(+)/H(+) antiporter that extrudes sodium in exchange for external protons. The polypeptide is Na(+)/H(+) antiporter NhaA (Serratia proteamaculans (strain 568)).